The following is a 61-amino-acid chain: Phosphoenolpyruvate synthase (61 aa).

Belongs to the PEP-utilizing enzyme family. The cofactor is Mg(2+).

It carries out the reaction pyruvate + ATP + H2O = phosphoenolpyruvate + AMP + phosphate + 2 H(+). The protein operates within carbohydrate biosynthesis; gluconeogenesis. Functionally, catalyzes the phosphorylation of pyruvate to phosphoenolpyruvate. The polypeptide is Phosphoenolpyruvate synthase (ppsA) (Enterobacter agglomerans (Erwinia herbicola)).